Reading from the N-terminus, the 353-residue chain is Uroporphyrinogen decarboxylase (353 aa).

Residues 30–34 (RQAGR), Asp79, Tyr154, Ser209, and His332 contribute to the substrate site.

It belongs to the uroporphyrinogen decarboxylase family. In terms of assembly, homodimer.

It localises to the cytoplasm. The catalysed reaction is uroporphyrinogen III + 4 H(+) = coproporphyrinogen III + 4 CO2. It functions in the pathway porphyrin-containing compound metabolism; protoporphyrin-IX biosynthesis; coproporphyrinogen-III from 5-aminolevulinate: step 4/4. Catalyzes the decarboxylation of four acetate groups of uroporphyrinogen-III to yield coproporphyrinogen-III. The chain is Uroporphyrinogen decarboxylase from Mycolicibacterium smegmatis (strain ATCC 700084 / mc(2)155) (Mycobacterium smegmatis).